The sequence spans 307 residues: Transmembrane and coiled-coil domain-containing protein 5B (307 aa).

The stretch at Thr20–Val212 forms a coiled coil. Residues Tyr246–Val268 traverse the membrane as a helical segment.

The protein belongs to the TMCO5 family.

It localises to the membrane. The polypeptide is Transmembrane and coiled-coil domain-containing protein 5B (Tmco5b) (Mus musculus (Mouse)).